Here is a 339-residue protein sequence, read N- to C-terminus: Pleckstrin homology domain protein opy1 (339 aa).

Positions 25–119 (RVLKSGWLIK…WVHVLRSTTG (95 aa)) constitute a PH 1 domain. A compositionally biased stretch (polar residues) spans 141 to 167 (ESEPNVQISDTDFDNISTEPRNQTTSP). The disordered stretch occupies residues 141–170 (ESEPNVQISDTDFDNISTEPRNQTTSPLDL). A PH 2 domain is found at 233-330 (KVLMQGTIHW…WVAALKTSID (98 aa)).

Interacts (via domain PH 1) with phosphatidylinositol 4-phosphate 5-kinase its3; the interaction is direct but opy1 does not appear to regulate its3 localization or function.

Its subcellular location is the cell tip. The protein resides in the cell membrane. Binds phosphatidylinositol 4,5-bisphosphate (PtdIns(4,5)P2/PIP2) at the cell membrane. The chain is Pleckstrin homology domain protein opy1 from Schizosaccharomyces pombe (strain 972 / ATCC 24843) (Fission yeast).